Here is a 687-residue protein sequence, read N- to C-terminus: Pentatricopeptide repeat-containing protein At3g09060 (687 aa).

18 PPR repeats span residues 42 to 76 (SAVVYHHILRRLSETRMVNHVSRIVELIRSQECKC), 77 to 107 (DEDVALSVIKTYGKNSMPDQALDVFKRMREI), 113 to 147 (AIRSYNTLLNAFVEAKQWVKVESLFAYFETAGVAP), 148 to 182 (NLQTYNVLIKMSCKKKEFEKARGFLDWMWKEGFKP), 183 to 217 (DVFSYSTVINDLAKAGKLDDALELFDEMSERGVAP), 218 to 253 (DVTCYNILIDGFLKEKDHKTAMELWDRLLEDSSVYP), 254 to 288 (NVKTHNIMISGLSKCGRVDDCLKIWERMKQNEREK), 289 to 323 (DLYTYSSLIHGLCDAGNVDKAESVFNELDERKASI), 324 to 358 (DVVTYNTMLGGFCRCGKIKESLELWRIMEHKNSVN), 359 to 392 (IVSYNILIKGLLENGKIDEATMIWRLMPAKGYAA), 393 to 427 (DKTTYGIFIHGLCVNGYVNKALGVMQEVESSGGHL), 428 to 462 (DVYAYASIIDCLCKKKRLEEASNLVKEMSKHGVEL), 463 to 497 (NSHVCNALIGGLIRDSRLGEASFFLREMGKNGCRP), 498 to 532 (TVVSYNILICGLCKAGKFGEASAFVKEMLENGWKP), 533 to 567 (DLKTYSILLCGLCRDRKIDLALELWHQFLQSGLET), 568 to 602 (DVMMHNILIHGLCSVGKLDDAMTVMANMEHRNCTA), 603 to 637 (NLVTYNTLMEGFFKVGDSNRATVIWGYMYKMGLQP), and 638 to 672 (DIISYNTIMKGLCMCRGVSYAMEFFDDARNHGIFP).

Belongs to the PPR family. P subfamily.

In Arabidopsis thaliana (Mouse-ear cress), this protein is Pentatricopeptide repeat-containing protein At3g09060.